Reading from the N-terminus, the 661-residue chain is MEGAAAPVAGDRPDLGLGAPGSPREAVAGATAALEPRKPHGVKRHHHKHNLKHRYELQETLGKGTYGKVKRATERFSGRVVAIKSIRKDKIKDEQDMVHIRREIEIMSSLNHPHIISIYEVFENKDKIVIIMEYASKGELYDYISERRRLSERETRHFFRQIVSAVHYCHKNGVVHRDLKLENILLDDNCNIKIADFGLSNLYQKDKFLQTFCGSPLYASPEIVNGRPYRGPEVDSWALGVLLYTLVYGTMPFDGFDHKNLIRQISSGEYREPTQPSDARGLIRWMLMVNPDRRATIEDIANHWWVNWGYKSSVCDCDALHDSESPLLARIIDWHHRSTGLQADTEAKMKGLAKPTTSEVMLERQRSLKKSKKENDFAQSGQDAVPESPSKLSSKRPKGILKKRSNSEHRSHSTGFIEGVVGPALPSTFKMEQDLCRTGVLLPSSPEAEVPGKLSPKQSATMPKKGILKKTQQRESGYYSSPERSESSELLDSNDVMGSSIPSPSPPDPARVTSHSLSCRRKGILKHSSKYSAGTMDPALVSPEMPTLESLSEPGVPAEGLSRSYSRPSSVISDDSVLSSDSFDLLDLQENRPARQRIRSCVSAENFLQIQDFEGLQNRPRPQYLKRYRNRLADSSFSLLTDMDDVTQVYKQALEICSKLN.

At M1 the chain carries N-acetylmethionine. The interval 1–24 (MEGAAAPVAGDRPDLGLGAPGSPR) is disordered. The residue at position 22 (S22) is a Phosphoserine. A Protein kinase domain is found at 55–306 (YELQETLGKG…IEDIANHWWV (252 aa)). Residues 61-69 (LGKGTYGKV) and K84 each bind ATP. D178 acts as the Proton acceptor in catalysis. T211 carries the phosphothreonine; by LKB1 modification. Disordered stretches follow at residues 345–421 (TEAK…EGVV) and 442–570 (LPSS…RPSS). Over residues 393–404 (SSKRPKGILKKR) the composition is skewed to basic residues. A GILK motif motif is present at residues 399 to 402 (GILK). S455 carries the post-translational modification Phosphoserine. The span at 518 to 529 (SCRRKGILKHSS) shows a compositional bias: basic residues. S600 carries the phosphoserine; by PKB/AKT1 modification.

It belongs to the protein kinase superfamily. CAMK Ser/Thr protein kinase family. SNF1 subfamily. In terms of assembly, interacts (via GILK motif) with PPP1CB; the interaction is direct and bridges NUAK1 and PPP1R12A. Interacts with CDKN1A. The cofactor is Mg(2+). In terms of processing, ubiquitinated with 'Lys-29'- and 'Lys-33'-linked polyubiquitins which appear to impede LKB1-mediated phosphorylation. Deubiquitinated by USP9X. Post-translationally, phosphorylated at Thr-211 by STK11/LKB1 in complex with STE20-related adapter-alpha (STRADA) pseudo kinase and CAB39. Not dephosphorylated by the myosin PP1 complex when regulating its activity, due to the presence of PPP1R12A, which prevents myosin PP1 from dephosphorylating NUAK1. Phosphorylated by STK38L upon stimulation with IGF1. Expressed at high levels in heart and brain, and at lower levels in skeletal muscle, kidney, ovary, placenta, lung and liver. Highly up-regulated in colorectal cancer cell lines.

It localises to the nucleus. Its subcellular location is the cytoplasm. The enzyme catalyses L-seryl-[protein] + ATP = O-phospho-L-seryl-[protein] + ADP + H(+). It catalyses the reaction L-threonyl-[protein] + ATP = O-phospho-L-threonyl-[protein] + ADP + H(+). Its activity is regulated as follows. Activated by phosphorylation on Thr-211. Activated by phosphorylation at Ser-600 AKT1 during glucose starvation; the relevance of such activation in normal cells is however unsure. Its function is as follows. Serine/threonine-protein kinase involved in various processes such as cell adhesion, regulation of cell ploidy and senescence, cell proliferation and tumor progression. Phosphorylates ATM, CASP6, LATS1, PPP1R12A and p53/TP53. Acts as a regulator of cellular senescence and cellular ploidy by mediating phosphorylation of 'Ser-464' of LATS1, thereby controlling its stability. Controls cell adhesion by regulating activity of the myosin protein phosphatase 1 (PP1) complex. Acts by mediating phosphorylation of PPP1R12A subunit of myosin PP1: phosphorylated PPP1R12A then interacts with 14-3-3, leading to reduced dephosphorylation of myosin MLC2 by myosin PP1. May be involved in DNA damage response: phosphorylates p53/TP53 at 'Ser-15' and 'Ser-392' and is recruited to the CDKN1A/WAF1 promoter to participate in transcription activation by p53/TP53. May also act as a tumor malignancy-associated factor by promoting tumor invasion and metastasis under regulation and phosphorylation by AKT1. Suppresses Fas-induced apoptosis by mediating phosphorylation of CASP6, thereby suppressing the activation of the caspase and the subsequent cleavage of CFLAR. Regulates UV radiation-induced DNA damage response mediated by CDKN1A. In association with STK11, phosphorylates CDKN1A in response to UV radiation and contributes to its degradation which is necessary for optimal DNA repair. The protein is NUAK family SNF1-like kinase 1 (NUAK1) of Homo sapiens (Human).